The primary structure comprises 76 residues: Conotoxin Lt6.1 (76 aa).

The N-terminal stretch at 1–22 (MKLTCVLIIAVLFLMDNQLITA) is a signal peptide. A propeptide spanning residues 23–48 (DYPRDEQVYRAVRLRDAMQKSKGSGS) is cleaved from the precursor. 3 cysteine pairs are disulfide-bonded: Cys49-Cys62, Cys56-Cys67, and Cys61-Cys75.

This sequence belongs to the conotoxin O1 superfamily. As to expression, expressed by the venom duct.

Its subcellular location is the secreted. The sequence is that of Conotoxin Lt6.1 from Conus litteratus (Lettered cone).